The primary structure comprises 1168 residues: DNA-directed RNA polymerase subunit beta (1168 aa).

Belongs to the RNA polymerase beta chain family. As to quaternary structure, the RNAP catalytic core consists of 2 alpha, 1 beta, 1 beta' and 1 omega subunit. When a sigma factor is associated with the core the holoenzyme is formed, which can initiate transcription.

The catalysed reaction is RNA(n) + a ribonucleoside 5'-triphosphate = RNA(n+1) + diphosphate. Its function is as follows. DNA-dependent RNA polymerase catalyzes the transcription of DNA into RNA using the four ribonucleoside triphosphates as substrates. The chain is DNA-directed RNA polymerase subunit beta from Rhodococcus jostii (strain RHA1).